A 713-amino-acid chain; its full sequence is Major surface-labeled trophozoite antigen 417 (713 aa).

An N-terminal signal peptide occupies residues 1-17 (MFGRFLLAIVILQLART). Over 18 to 679 (ACTQEADDGK…KDSGSTNKSG (662 aa)) the chain is Extracellular. N-linked (GlcNAc...) asparagine glycosylation is found at Asn-289 and Asn-676. Residues 680-708 (LSTGAIAGISVAVIVVVGGLIGFLCWWFL) traverse the membrane as a helical segment. At 709–713 (CRGKA) the chain is on the cytoplasmic side.

It belongs to the Giardia variant surface protein family.

The protein localises to the cell membrane. This Giardia intestinalis (Giardia lamblia) protein is Major surface-labeled trophozoite antigen 417 (TSA 417).